A 243-amino-acid polypeptide reads, in one-letter code: 3-deoxy-manno-octulosonate cytidylyltransferase (243 aa).

The protein belongs to the KdsB family.

Its subcellular location is the cytoplasm. The catalysed reaction is 3-deoxy-alpha-D-manno-oct-2-ulosonate + CTP = CMP-3-deoxy-beta-D-manno-octulosonate + diphosphate. It functions in the pathway nucleotide-sugar biosynthesis; CMP-3-deoxy-D-manno-octulosonate biosynthesis; CMP-3-deoxy-D-manno-octulosonate from 3-deoxy-D-manno-octulosonate and CTP: step 1/1. It participates in bacterial outer membrane biogenesis; lipopolysaccharide biosynthesis. Its function is as follows. Activates KDO (a required 8-carbon sugar) for incorporation into bacterial lipopolysaccharide in Gram-negative bacteria. The protein is 3-deoxy-manno-octulosonate cytidylyltransferase of Helicobacter pylori (strain G27).